We begin with the raw amino-acid sequence, 430 residues long: Serine hydroxymethyltransferase (430 aa).

(6S)-5,6,7,8-tetrahydrofolate contacts are provided by residues Leu123 and 127-129 (GHL). Lys232 carries the post-translational modification N6-(pyridoxal phosphate)lysine. Glu248 contacts (6S)-5,6,7,8-tetrahydrofolate.

It belongs to the SHMT family. As to quaternary structure, homodimer. Requires pyridoxal 5'-phosphate as cofactor.

The protein resides in the cytoplasm. The catalysed reaction is (6R)-5,10-methylene-5,6,7,8-tetrahydrofolate + glycine + H2O = (6S)-5,6,7,8-tetrahydrofolate + L-serine. Its pathway is one-carbon metabolism; tetrahydrofolate interconversion. It functions in the pathway amino-acid biosynthesis; glycine biosynthesis; glycine from L-serine: step 1/1. Functionally, catalyzes the reversible interconversion of serine and glycine with tetrahydrofolate (THF) serving as the one-carbon carrier. This reaction serves as the major source of one-carbon groups required for the biosynthesis of purines, thymidylate, methionine, and other important biomolecules. Also exhibits THF-independent aldolase activity toward beta-hydroxyamino acids, producing glycine and aldehydes, via a retro-aldol mechanism. This chain is Serine hydroxymethyltransferase, found in Anaplasma marginale (strain Florida).